The chain runs to 563 residues: Membrane protein insertase YidC (563 aa).

A helical membrane pass occupies residues 1-21; that stretch reads MDIKRTILIVALAIVTYVGVL. Residues 43–62 are disordered; the sequence is APGIPDTAAGTNGSASADVP. Transmembrane regions (helical) follow at residues 344 to 364, 370 to 390, 440 to 460, 471 to 491, and 518 to 538; these read LELT…FWLL, ILGN…GLFF, LGGC…YWVL, WILW…PIIM, and PIIF…YWVV.

This sequence belongs to the OXA1/ALB3/YidC family. Type 1 subfamily. As to quaternary structure, interacts with the Sec translocase complex via SecD. Specifically interacts with transmembrane segments of nascent integral membrane proteins during membrane integration.

The protein resides in the cell inner membrane. Its function is as follows. Required for the insertion and/or proper folding and/or complex formation of integral membrane proteins into the membrane. Involved in integration of membrane proteins that insert both dependently and independently of the Sec translocase complex, as well as at least some lipoproteins. Aids folding of multispanning membrane proteins. In Pseudomonas savastanoi pv. phaseolicola (strain 1448A / Race 6) (Pseudomonas syringae pv. phaseolicola (strain 1448A / Race 6)), this protein is Membrane protein insertase YidC.